Reading from the N-terminus, the 441-residue chain is Synaptotagmin-1 (441 aa).

The Vesicular portion of the chain corresponds to 1 to 69; sequence MVKLDFSSQD…DVVKEKVMQQ (69 aa). The helical transmembrane segment at 70–96 threads the bilayer; it reads TGMPEWAFVFLGFVFILLVLACAFCLI. Topologically, residues 97–441 are cytoplasmic; it reads RKLFGKKRHG…EEGDKKDDKK (345 aa). 2 consecutive C2 domains span residues 159 to 278 and 292 to 425; these read KLGR…EEWK and SLGD…AQWH. Ca(2+) is bound by residues D190, D196, D248, F249, D250, S253, K254, D256, D323, D329, D383, D385, and D391.

This sequence belongs to the synaptotagmin family. The cofactor is Ca(2+). In terms of tissue distribution, localized to regions known to be rich in synapses and appears to be associated with synaptic vesicles. Also found in some non-neuronal secretory structures.

The protein resides in the cytoplasmic vesicle. The protein localises to the secretory vesicle. Its subcellular location is the synaptic vesicle membrane. It localises to the synapse. May have a regulatory role in the membrane interactions during trafficking of synaptic vesicles at the active zone of the synapse. It binds acidic phospholipids with a specificity that requires the presence of both an acidic head group and a diacyl backbone. Involved in necrotic cell death. The protein is Synaptotagmin-1 (snt-1) of Caenorhabditis elegans.